We begin with the raw amino-acid sequence, 548 residues long: Flagellin (548 aa).

The protein belongs to the bacterial flagellin family.

It is found in the secreted. The protein resides in the bacterial flagellum. Functionally, flagellin is the subunit protein which polymerizes to form the filaments of bacterial flagella. In Escherichia coli O127:H6 (strain E2348/69 / EPEC), this protein is Flagellin (fliC).